The sequence spans 576 residues: (+)-alpha-terpineol synthase (576 aa).

(2E)-geranyl diphosphate contacts are provided by R286, D323, D327, R466, and N469. Mg(2+) is bound by residues D323 and D327. A DDXXD motif motif is present at residues 323–327 (DDVYD). Residues N469, T473, and E477 each contribute to the Mg(2+) site.

Belongs to the terpene synthase family. Tpsb subfamily. Mg(2+) is required as a cofactor. The cofactor is Mn(2+).

It catalyses the reaction (2E,6E)-farnesyl diphosphate = beta-bisabolene + diphosphate. The catalysed reaction is (2E)-geranyl diphosphate + H2O = (R)-alpha-terpineol + diphosphate. The enzyme catalyses (2E)-geranyl diphosphate = (4S)-limonene + diphosphate. The protein operates within secondary metabolite biosynthesis; terpenoid biosynthesis. Monoterpene synthase which catalyzes the conversion of (2E)-geranyl diphosphate (GPP) to (R)-alpha-terpineol and (4S)-limonene, as well as small quantities of linalool, myrcene, (-)-alpha-pinene, (+)-sabinene and geraniol. To a lower extent, catalyzes the conversion of (2E,6E)-farnesyl diphosphate (FPP) to beta-bisabolene. This chain is (+)-alpha-terpineol synthase, found in Santalum album (White sandalwood).